Consider the following 177-residue polypeptide: Large ribosomal subunit protein uL6 (177 aa).

It belongs to the universal ribosomal protein uL6 family. Part of the 50S ribosomal subunit.

Functionally, this protein binds to the 23S rRNA, and is important in its secondary structure. It is located near the subunit interface in the base of the L7/L12 stalk, and near the tRNA binding site of the peptidyltransferase center. This Methylobacillus flagellatus (strain ATCC 51484 / DSM 6875 / VKM B-1610 / KT) protein is Large ribosomal subunit protein uL6.